We begin with the raw amino-acid sequence, 392 residues long: Putative non-inhibitory serpin-10 (392 aa).

The interval G333 to R357 is RCL.

This sequence belongs to the serpin family.

The polypeptide is Putative non-inhibitory serpin-10 (Oryza sativa subsp. japonica (Rice)).